Reading from the N-terminus, the 289-residue chain is Ribosomal protein L11 methyltransferase (289 aa).

S-adenosyl-L-methionine-binding residues include threonine 135, glycine 156, aspartate 179, and asparagine 225.

Belongs to the methyltransferase superfamily. PrmA family.

The protein localises to the cytoplasm. The catalysed reaction is L-lysyl-[protein] + 3 S-adenosyl-L-methionine = N(6),N(6),N(6)-trimethyl-L-lysyl-[protein] + 3 S-adenosyl-L-homocysteine + 3 H(+). Methylates ribosomal protein L11. The chain is Ribosomal protein L11 methyltransferase from Chlorobaculum parvum (strain DSM 263 / NCIMB 8327) (Chlorobium vibrioforme subsp. thiosulfatophilum).